Consider the following 105-residue polypeptide: Small ribosomal subunit protein uS10 (105 aa).

The protein belongs to the universal ribosomal protein uS10 family. As to quaternary structure, part of the 30S ribosomal subunit.

Functionally, involved in the binding of tRNA to the ribosomes. The protein is Small ribosomal subunit protein uS10 of Acaryochloris marina (strain MBIC 11017).